A 72-amino-acid chain; its full sequence is Thiostrepton (72 aa).

The propeptide occupies 1-55 (MDATAIHERWSVMSNASIGQEIGVEGLTGLDVDALEISDYVDETLLDGEDLTVTM). The 4-(1-hydroxyethyl)-7-isoleucino-2-(threonin-O3-ylcarbonyl)-7,8-dihydroquinolin-8-ol (Ile-Thr) cross-link spans 56-67 (IASASCTTCICT). Ser-58 carries the post-translational modification 2,3-didehydroalanine (Ser). The segment at residues 60 to 61 (SC) is a cross-link (thiazole-4-carboxylic acid (Ser-Cys)). The 5-amino-piperideine-2,5-dicarboxylic acid (Ser-Cys) (with S-69) cross-link spans 60–68 (SCTTCICTC). The segment at residues 60–69 (SCTTCICTCS) is a cross-link (5-amino-piperideine-2,5-dicarboxylic acid (Ser-Ser) (with C-68)). At Thr-63 the chain carries (Z)-2,3-didehydrobutyrine. The (4S)-thiazoline-4-carboxylic acid (Thr-Cys) cross-link spans 63 to 64 (TC). Residue Ile-65 is modified to (3S,4R)-3,4-dihydroxyisoleucine. Residues 65-66 (IC) constitute a cross-link (thiazole-4-carboxylic acid (Ile-Cys)). The segment at residues 67-68 (TC) is a cross-link (thiazole-4-carboxylic acid (Thr-Cys)). A cross-link (thiazole-4-carboxylic acid (Ser-Cys)) is located at residues 69 to 70 (SC). Residues Ser-71 and Ser-72 each carry the 2,3-didehydroalanine (Ser) modification. A Serine amide modification is found at Ser-72.

The protein belongs to the thiocillin family. Post-translationally, maturation of thiazole and oxazole containing antibiotics involves the enzymatic condensation of a Cys, Ser or Thr with the alpha-carbonyl of the preceding amino acid to form a thioether or ether bond, then dehydration to form a double bond with the alpha-amino nitrogen. Thiazoline or oxazoline ring are dehydrogenated to form thiazole or oxazole rings. In terms of processing, maturation of pyridinyl containing antibiotics involves the cross-linking of a Ser and a Cys-Ser pair usually separated by 7 or 8 residues along the peptide chain. The Ser residues are dehydrated to didehydroalanines, then bonded between their beta carbons. The alpha carbonyl of the Cys condenses with alpha carbon of the first Ser to form a pyridinyl ring. The ring may be multiply dehydrogenated to form a pyridine ring with loss of the amino nitrogen of the first Ser. The amidation of Ser-72 probably does not occur by the same mechanism, oxidative cleavage of glycine, as in eukaryotes. Post-translationally, the structure of the 2,3-didehydrobutyrin is shown to be Z-isomer.

The protein localises to the secreted. Its function is as follows. Has bacteriocidal activity. Inhibits bacterial protein biosynthesis by acting on the elongation factor Tu (EF-Tu). In Streptomyces azureus, this protein is Thiostrepton (tpdA).